The sequence spans 203 residues: RNA chaperone ProQ (203 aa).

A disordered region spans residues 111–138 (KAKRQALAPKKPAKKVAPKRAPAVKKER).

This sequence belongs to the ProQ family.

It is found in the cytoplasm. In terms of biological role, RNA chaperone with significant RNA binding, RNA strand exchange and RNA duplexing activities. This Shewanella frigidimarina (strain NCIMB 400) protein is RNA chaperone ProQ.